Consider the following 203-residue polypeptide: Putative phosphoserine phosphatase 2 (203 aa).

Residue His9 is the Tele-phosphohistidine intermediate of the active site. The active site involves His149.

This sequence belongs to the histidine phosphatase superfamily. Metal-independent phosphoserine phosphatase family. Heterodimer with PspA. The PspB subunit appears to have no or considerably lower PSP activity compared with that of PspA.

It carries out the reaction O-phospho-L-serine + H2O = L-serine + phosphate. The catalysed reaction is O-phospho-D-serine + H2O = D-serine + phosphate. It participates in amino-acid biosynthesis; L-serine biosynthesis; L-serine from 3-phospho-D-glycerate: step 3/3. With respect to regulation, activity is not inhibited by EDTA in vitro, nor enhanced by the addition of Mg(2+). Functionally, part of a complex that catalyzes the dephosphorylation of L-phosphoserine to serine and inorganic phosphate. Is poorly or not active toward D-phosphoserine, DL-phosphothreonine, 3-phosphoglycerate, para-nitrophenylphosphate, and fructose-6-phosphate. Does not display phosphoglycerate mutase activity. The chain is Putative phosphoserine phosphatase 2 (pspB) from Hydrogenobacter thermophilus (strain DSM 6534 / IAM 12695 / TK-6).